Consider the following 557-residue polypeptide: E3 ubiquitin-protein ligase ARIH1 (557 aa).

Residues 1 to 47 (MDSDEGYNYEFDEDEECSEEDSGAEEEEDEDDDEPDDDTLDLGEVEL) are compositionally biased toward acidic residues. The interval 1–95 (MDSDEGYNYE…GGGGGPGHEQ (95 aa)) is disordered. Positions 65-92 (ETGGGGGSALGPGGGGGGGGGGGGGGPG) are enriched in gly residues. A UBA-like region spans residues 105 to 153 (TAEQILQHMVECIREVNEVIQNPATITRILLSHFNWDKEKLMERYFDGN). Residue Lys-142 is modified to N6-acetyllysine. The segment at 182–393 (QDMPCQICYL…SAWYNCNRYN (212 aa)) is TRIAD supradomain. Residues Cys-186, Cys-189, Cys-203, His-205, Cys-208, Cys-211, Cys-231, Cys-236, Cys-276, Cys-281, Cys-297, Cys-299, Cys-304, Cys-307, His-312, Cys-317, Cys-344, and Cys-347 each coordinate Zn(2+). Residues 186-236 (CQICYLNYPNSYFTGLECGHKFCMQCWSEYLTTKIMEEGMGQTISCPAHGC) form an RING-type 1 zinc finger. The segment at 256–317 (LKYQHLITNS…GENWHDPVKC (62 aa)) adopts an IBR-type zinc-finger fold. The RING-type 2; atypical zinc-finger motif lies at 344–375 (CPKCHVTIEKDGGCNHMVCRNQNCKAEFCWVC). Cys-357 is an active-site residue. Cys-362, Cys-367, Cys-372, Cys-375, His-382, and Cys-389 together coordinate Zn(2+). Residues 408-557 (RAALQRYLFY…EKDLWEYIED (150 aa)) form an ariadne domain region.

Belongs to the RBR family. Ariadne subfamily. In terms of assembly, interacts (via the first RING-type zinc finger) with UBE2L3. Associates with cullin-RING ubiquitin ligase (CRL) complexes containing CUL1, CUL2 and CUL3. Interacts with neddylated CUL1. Interacts with neddylated CUL2. Interacts with neddylated CUL3. Interacts with neddylated CUL4A. As to expression, widely expressed.

The protein resides in the cytoplasm. The protein localises to the nucleus. It localises to the cajal body. It catalyses the reaction [E2 ubiquitin-conjugating enzyme]-S-ubiquitinyl-L-cysteine + [acceptor protein]-L-lysine = [E2 ubiquitin-conjugating enzyme]-L-cysteine + [acceptor protein]-N(6)-ubiquitinyl-L-lysine.. Its pathway is protein modification; protein ubiquitination. Autoinhibited by the ariadne domain, which masks the second RING-type zinc finger that contains the active site and inhibits the E3 activity. Inhibition is relieved upon binding to neddylated cullin-RING ubiquitin ligase complexes, which activate the E3 ligase activity of ARIH1. Functionally, E3 ubiquitin-protein ligase, which catalyzes ubiquitination of target proteins together with ubiquitin-conjugating enzyme E2 UBE2L3. Acts as an atypical E3 ubiquitin-protein ligase by working together with cullin-RING ubiquitin ligase (CRL) complexes and initiating ubiquitination of CRL substrates: associates with CRL complexes and specifically mediates addition of the first ubiquitin on CRLs targets. The initial ubiquitin is then elongated by CDC34/UBE2R1 and UBE2R2. E3 ubiquitin-protein ligase activity is activated upon binding to neddylated cullin-RING ubiquitin ligase complexes. Plays a role in protein translation in response to DNA damage by mediating ubiquitination of EIF4E2, the consequences of EIF4E2 ubiquitination are however unclear. According to a report, EIF4E2 ubiquitination leads to promote EIF4E2 cap-binding and protein translation arrest. According to another report EIF4E2 ubiquitination leads to its subsequent degradation. Acts as the ligase involved in ISGylation of EIF4E2. In vitro, controls the degradation of the LINC (LInker of Nucleoskeleton and Cytoskeleton) complex member SUN2 and may therefore have a role in the formation and localization of the LINC complex, and as a consequence, nuclear subcellular localization and nuclear morphology. The sequence is that of E3 ubiquitin-protein ligase ARIH1 from Homo sapiens (Human).